The sequence spans 587 residues: Chaperonin GroEL 1 (587 aa).

Residues 29–32 (TIGP), 86–90 (DGTTT), Gly413, and Asp492 contribute to the ATP site.

It belongs to the chaperonin (HSP60) family. Forms a cylinder of 14 subunits composed of two heptameric rings stacked back-to-back. Interacts with the co-chaperonin GroES.

It localises to the cytoplasm. The catalysed reaction is ATP + H2O + a folded polypeptide = ADP + phosphate + an unfolded polypeptide.. Functionally, together with its co-chaperonin GroES, plays an essential role in assisting protein folding. The GroEL-GroES system forms a nano-cage that allows encapsulation of the non-native substrate proteins and provides a physical environment optimized to promote and accelerate protein folding. This chain is Chaperonin GroEL 1, found in Prochlorococcus marinus (strain MIT 9515).